The sequence spans 187 residues: Elongation factor P (187 aa).

This sequence belongs to the elongation factor P family.

The protein localises to the cytoplasm. It participates in protein biosynthesis; polypeptide chain elongation. Its function is as follows. Involved in peptide bond synthesis. Stimulates efficient translation and peptide-bond synthesis on native or reconstituted 70S ribosomes in vitro. Probably functions indirectly by altering the affinity of the ribosome for aminoacyl-tRNA, thus increasing their reactivity as acceptors for peptidyl transferase. This chain is Elongation factor P, found in Rhodococcus opacus (strain B4).